Consider the following 797-residue polypeptide: Protein tamozhennic (797 aa).

Positions 79-146 (QNAIVAFETI…AAEDTFVLEG (68 aa)) constitute a PUB domain. Disordered regions lie at residues 515–570 (AGGI…ISDL) and 638–697 (LSIT…SAGV). A compositionally biased stretch (basic and acidic residues) spans 662–679 (EKARTLDKKSGTGRREAK). The RanBP2-type zinc-finger motif lies at 735–766 (IVTSPNEWSCSFCTFLNPDTKRICEMCCRSKD).

In terms of assembly, homomultimer. Binds to dl and msl-1 via their nuclear localization signal (NLS). Also binds to Ran, Ran-like and mbo.

It is found in the cytoplasm. Has an essential role during oogenesis and embryogenesis, perhaps in modulating the levels of nuclear import of additional proteins. Modulates the nuclear import of dorsal (dl), Dif and male specific lethal 1 (msl-1). Negatively regulates nuclear import of dl and controls the accumulation of dl in the nucleus after immune challenge. This is Protein tamozhennic (tamo) from Drosophila melanogaster (Fruit fly).